The primary structure comprises 233 residues: Large ribosomal subunit protein uL1 (233 aa).

This sequence belongs to the universal ribosomal protein uL1 family. As to quaternary structure, part of the 50S ribosomal subunit.

Functionally, binds directly to 23S rRNA. The L1 stalk is quite mobile in the ribosome, and is involved in E site tRNA release. Its function is as follows. Protein L1 is also a translational repressor protein, it controls the translation of the L11 operon by binding to its mRNA. The polypeptide is Large ribosomal subunit protein uL1 (Geobacillus thermodenitrificans (strain NG80-2)).